Reading from the N-terminus, the 855-residue chain is Replication factor C small subunit (855 aa).

Residues 185–308 (WLGYFLGGGY…IAYALAGFGI (124 aa)) form the DOD-type homing endonuclease domain.

Belongs to the activator 1 small subunits family. RfcS subfamily. Heteromultimer composed of small subunits (RfcS) and large subunits (RfcL). In terms of processing, this protein undergoes a protein self splicing that involves a post-translational excision of the intervening region (intein) followed by peptide ligation.

In terms of biological role, part of the RFC clamp loader complex which loads the PCNA sliding clamp onto DNA. This chain is Replication factor C small subunit (rfcS), found in Pyrococcus horikoshii (strain ATCC 700860 / DSM 12428 / JCM 9974 / NBRC 100139 / OT-3).